Consider the following 134-residue polypeptide: Small ribosomal subunit protein uS11 (134 aa).

Residues 1–24 (MATKMAGVKRAGRKRKERKNIERG) are disordered.

It belongs to the universal ribosomal protein uS11 family. As to quaternary structure, part of the 30S ribosomal subunit. Interacts with proteins S7 and S18. Binds to IF-3.

Located on the platform of the 30S subunit, it bridges several disparate RNA helices of the 16S rRNA. Forms part of the Shine-Dalgarno cleft in the 70S ribosome. This is Small ribosomal subunit protein uS11 from Acetivibrio thermocellus (strain ATCC 27405 / DSM 1237 / JCM 9322 / NBRC 103400 / NCIMB 10682 / NRRL B-4536 / VPI 7372) (Clostridium thermocellum).